A 527-amino-acid chain; its full sequence is T-complex protein 1 subunit delta (527 aa).

The protein belongs to the TCP-1 chaperonin family. Heterooligomeric complex of about 850 to 900 kDa that forms two stacked rings, 12 to 16 nm in diameter.

The protein resides in the cytoplasm. In terms of biological role, molecular chaperone; assists the folding of proteins upon ATP hydrolysis. Known to play a role, in vitro, in the folding of actin and tubulin. In Schizosaccharomyces pombe (strain 972 / ATCC 24843) (Fission yeast), this protein is T-complex protein 1 subunit delta (cct4).